Here is a 273-residue protein sequence, read N- to C-terminus: HTH-type transcriptional regulator NimR (273 aa).

An HTH araC/xylS-type domain is found at 158-258 (PKIRTMVEMM…GQTPGRYIAR (101 aa)). 2 consecutive DNA-binding regions (H-T-H motif) follow at residues 178-199 (GQWA…VKET) and 225-248 (VQKV…KKGL).

Its function is as follows. Negatively regulates expression of the nimT operon and its own expression. Acts by binding to the nimR-nimT intergenic region. The sequence is that of HTH-type transcriptional regulator NimR from Escherichia coli (strain K12).